The following is a 129-amino-acid chain: UPF0047 protein Mb2586c (129 aa).

Belongs to the UPF0047 family.

This Mycobacterium bovis (strain ATCC BAA-935 / AF2122/97) protein is UPF0047 protein Mb2586c.